The sequence spans 381 residues: Succinyl-diaminopimelate desuccinylase (381 aa).

Histidine 68 is a binding site for Zn(2+). Aspartate 70 is a catalytic residue. Position 101 (aspartate 101) interacts with Zn(2+). Glutamate 135 serves as the catalytic Proton acceptor. Positions 136, 164, and 350 each coordinate Zn(2+).

This sequence belongs to the peptidase M20A family. DapE subfamily. In terms of assembly, homodimer. It depends on Zn(2+) as a cofactor. The cofactor is Co(2+).

It catalyses the reaction N-succinyl-(2S,6S)-2,6-diaminopimelate + H2O = (2S,6S)-2,6-diaminopimelate + succinate. Its pathway is amino-acid biosynthesis; L-lysine biosynthesis via DAP pathway; LL-2,6-diaminopimelate from (S)-tetrahydrodipicolinate (succinylase route): step 3/3. Functionally, catalyzes the hydrolysis of N-succinyl-L,L-diaminopimelic acid (SDAP), forming succinate and LL-2,6-diaminopimelate (DAP), an intermediate involved in the bacterial biosynthesis of lysine and meso-diaminopimelic acid, an essential component of bacterial cell walls. This is Succinyl-diaminopimelate desuccinylase from Neisseria meningitidis serogroup C / serotype 2a (strain ATCC 700532 / DSM 15464 / FAM18).